Here is a 574-residue protein sequence, read N- to C-terminus: Sulfate adenylyltransferase (574 aa).

An N-terminal region spans residues 1 to 170 (MANPPHGGVL…VEAIDRLEHY (170 aa)). Positions 171 to 395 (DYVGLRYTPA…LRESHPPRNQ (225 aa)) are catalytic. Gln-198 contacts sulfate. Residues 198-201 (QTRN) and 292-295 (GRDH) each bind ATP. Active-site residues include Thr-199, Arg-200, and Asn-201. Arg-200 contributes to the sulfate binding site. Ala-296 serves as a coordination point for sulfate. Met-334 is a binding site for ATP. Positions 396–574 (QGFTVFLTGY…LESQGLLTQL (179 aa)) are allosteric regulation domain; adenylyl-sulfate kinase-like. Residues 435-438 (ETVR), Arg-452, 478-479 (IA), and Arg-516 contribute to the 3'-phosphoadenylyl sulfate site.

In the N-terminal section; belongs to the sulfate adenylyltransferase family. This sequence in the C-terminal section; belongs to the APS kinase family. Homohexamer. Dimer of trimers.

The protein resides in the cytoplasm. It carries out the reaction sulfate + ATP + H(+) = adenosine 5'-phosphosulfate + diphosphate. Its pathway is sulfur metabolism; hydrogen sulfide biosynthesis; sulfite from sulfate: step 1/3. Its activity is regulated as follows. Allosterically inhibited by 3'-phosphoadenosine 5'-phosphosulfate (PAPS). In terms of biological role, catalyzes the first intracellular reaction of sulfate assimilation, forming adenosine-5'-phosphosulfate (APS) from inorganic sulfate and ATP. Plays an important role in sulfate activation as a component of the biosynthesis pathway of sulfur-containing amino acids. The protein is Sulfate adenylyltransferase of Phaeosphaeria nodorum (strain SN15 / ATCC MYA-4574 / FGSC 10173) (Glume blotch fungus).